The following is a 156-amino-acid chain: Small ribosomal subunit protein uS7 (156 aa).

The protein belongs to the universal ribosomal protein uS7 family. As to quaternary structure, part of the 30S ribosomal subunit. Contacts proteins S9 and S11.

Its function is as follows. One of the primary rRNA binding proteins, it binds directly to 16S rRNA where it nucleates assembly of the head domain of the 30S subunit. Is located at the subunit interface close to the decoding center, probably blocks exit of the E-site tRNA. In Thiobacillus denitrificans (strain ATCC 25259 / T1), this protein is Small ribosomal subunit protein uS7.